The following is a 2200-amino-acid chain: Non-reducing polyketide synthase tpeB (2200 aa).

One can recognise a Starter acyltransferase (SAT) domain in the interval 16 to 255 (FFGDQTVDTL…MDLPLGTPAH (240 aa)). Positions 382-815 (SNMIAIVGQS…GGNNCVLLEE (434 aa)) constitute a Ketosynthase family 3 (KS3) domain. Active-site for beta-ketoacyl synthase activity residues include Cys554, His690, and His729. A Malonyl-CoA:ACP transacylase (MAT) domain is found at 914–1202 (VFAFTGQGSQ…VLNSFIKATL (289 aa)). A product template (PT) domain region spans residues 1296 to 1621 (TASLQRVREE…TKRILTTILG (326 aa)). Residues 1300 to 1433 (QRVREERIQG…CKIRFESKAD (134 aa)) form an N-terminal hotdog fold region. The PKS/mFAS DH domain maps to 1300–1617 (QRVREERIQG…FQRLTKRILT (318 aa)). His1332 acts as the Proton acceptor; for dehydratase activity in catalysis. The C-terminal hotdog fold stretch occupies residues 1462 to 1617 (NGHKLPKPVV…FQRLTKRILT (156 aa)). Asp1522 (proton donor; for dehydratase activity) is an active-site residue. Positions 1625–1652 (DHHNSNEVRNGNATTTHTNPPAHATTQS) are disordered. Over residues 1636–1650 (NATTTHTNPPAHATT) the composition is skewed to low complexity. 2 Carrier domains span residues 1671–1748 (TVGE…AELP) and 1791–1865 (ANYA…GPNT). Ser1708 and Ser1825 each carry O-(pantetheine 4'-phosphoryl)serine. The interval 1931–2173 (MFFLPDGTGY…TVPCDHLSIM (243 aa)) is thioesterase (TE) domain.

Pantetheine 4'-phosphate serves as cofactor.

It participates in secondary metabolite biosynthesis. Functionally, non-reducing polyketide synthase; part of the gene cluster that mediates the biosynthesis of polyesters containing 2,4-dihydroxy-6-(2-hydroxypropyl)benzoate and 3-hydroxybutyrate moieties, such as talapolyester G, 15G256beta and 15G256beta-2; as well as to oxidized derivatives such as 15G256alpha. The biosynthesis of the polyesters probably starts with the formation of the diketide 3-hydroxybutyryl-S-ACP catalyzed by the partially reducing polyketide synthase tpeA. The acceptance of 3-hydroxybutyryl by the non-reducing polyketide synthase tpeB would initiate further elongation and cyclization, catalyzed by KS and PT, respectively, to form 2,4-dihydroxy-6-(2-hydroxyn-propyl)benzoyl-S-ACP intermediate. The TE domain could catalyze lactonization at this step to yield 6-hydroxymellein as a derailment product. The polyesterification process maybe occurs when additional molecules of 3-hydroxybutyryl are transferred to tpeB. Following the first esterification step, an intramolecular cyclization catalyzed by the TE domain of tpeB would give talarodioxadione 1, whereas the ethyl esterification of talapolyester G perhaps happens spontaneously. Further oxidation by the cytochrome P450 monooxygenase tpeC then leads to the formation of oxidized derivatives. This chain is Non-reducing polyketide synthase tpeB, found in Talaromyces stipitatus (strain ATCC 10500 / CBS 375.48 / QM 6759 / NRRL 1006) (Penicillium stipitatum).